The sequence spans 121 residues: uncharacterized protein (121 aa).

The segment at 101 to 121 (SIEPTATGSPETRDPDPSAYA) is disordered. Residues 111-121 (ETRDPDPSAYA) are compositionally biased toward basic and acidic residues.

The protein resides in the mitochondrion. This is an uncharacterized protein from Arabidopsis thaliana (Mouse-ear cress).